Reading from the N-terminus, the 56-residue chain is MAVPKRKKSRSTTRHRRAQWKTTPTQLVEIRVEGKVLRVPRNLVKAYHSGLIDVED.

Basic residues predominate over residues 1 to 19 (MAVPKRKKSRSTTRHRRAQ). Positions 1 to 22 (MAVPKRKKSRSTTRHRRAQWKT) are disordered.

It belongs to the bacterial ribosomal protein bL32 family.

This Cutibacterium acnes (strain DSM 16379 / KPA171202) (Propionibacterium acnes) protein is Large ribosomal subunit protein bL32.